Consider the following 147-residue polypeptide: 3-dehydroquinate dehydratase (147 aa).

Tyr23 functions as the Proton acceptor in the catalytic mechanism. Asn75, His81, and Asp88 together coordinate substrate. The active-site Proton donor is the His101. Substrate is bound by residues 102-103 (LS) and Arg112.

It belongs to the type-II 3-dehydroquinase family. In terms of assembly, homododecamer.

The enzyme catalyses 3-dehydroquinate = 3-dehydroshikimate + H2O. The protein operates within metabolic intermediate biosynthesis; chorismate biosynthesis; chorismate from D-erythrose 4-phosphate and phosphoenolpyruvate: step 3/7. Catalyzes a trans-dehydration via an enolate intermediate. This chain is 3-dehydroquinate dehydratase, found in Nitrosococcus oceani (strain ATCC 19707 / BCRC 17464 / JCM 30415 / NCIMB 11848 / C-107).